A 271-amino-acid chain; its full sequence is Catechol O-methyltransferase (271 aa).

At 1 to 6 the chain is on the cytoplasmic side; it reads MPEAPP. The chain crosses the membrane as a helical; Signal-anchor for type II membrane protein span at residues 7-26; the sequence is LLLAAVLLGLVLLVVLLLLL. The Extracellular portion of the chain corresponds to 27–271; the sequence is RHWGWGLCLI…YKGPGSEAGP (245 aa). S-adenosyl-L-methionine is bound by residues Val-92, Glu-114, Ser-122, Glu-140, Ile-141, 167-170, Ser-169, and Asp-191; that span reads GASQ. Asp-191 contributes to the Mg(2+) binding site. Lys-194 contributes to the substrate binding site. Mg(2+)-binding residues include Asp-219 and Asn-220. Positions 220 and 249 each coordinate substrate. Phosphoserine is present on Ser-267.

The protein belongs to the class I-like SAM-binding methyltransferase superfamily. Cation-dependent O-methyltransferase family. It depends on Mg(2+) as a cofactor. In terms of processing, the N-terminus is blocked. In terms of tissue distribution, brain, liver, placenta, lymphocytes and erythrocytes.

Its subcellular location is the cytoplasm. The protein localises to the cell membrane. It carries out the reaction a catechol + S-adenosyl-L-methionine = a guaiacol + S-adenosyl-L-homocysteine + H(+). The catalysed reaction is 2-hydroxyestrone + S-adenosyl-L-methionine = 2-hydroxy-3-methoxy-estrone + S-adenosyl-L-homocysteine + H(+). The enzyme catalyses 4-hydroxyestrone + S-adenosyl-L-methionine = 4-methoxyestrone + S-adenosyl-L-homocysteine + H(+). It catalyses the reaction 2-hydroxyestrone + S-adenosyl-L-methionine = 2-methoxyestrone + S-adenosyl-L-homocysteine + H(+). It carries out the reaction 4-hydroxy-17beta-estradiol + S-adenosyl-L-methionine = 4-methoxy-17beta-estradiol + S-adenosyl-L-homocysteine + H(+). The catalysed reaction is 2-hydroxy-17beta-estradiol + S-adenosyl-L-methionine = 2-hydroxy-3-methoxy-17beta-estradiol + S-adenosyl-L-homocysteine + H(+). The enzyme catalyses 2-hydroxy-17beta-estradiol + S-adenosyl-L-methionine = 2-methoxy-17beta-estradiol + S-adenosyl-L-homocysteine + H(+). In terms of biological role, catalyzes the O-methylation, and thereby the inactivation, of catecholamine neurotransmitters and catechol hormones. Also shortens the biological half-lives of certain neuroactive drugs, like L-DOPA, alpha-methyl DOPA and isoproterenol. This Homo sapiens (Human) protein is Catechol O-methyltransferase.